The chain runs to 460 residues: NADH-ubiquinone oxidoreductase chain 4 (460 aa).

13 helical membrane-spanning segments follow: residues 22 to 42 (WLWP…LLWF), 59 to 79 (IDPL…LMIL), 93 to 113 (QRIY…AFSA), 114 to 134 (TELI…LIII), 148 to 168 (TYFL…LLLM), 195 to 215 (FWWT…GVHL), 225 to 245 (PIAG…YGMM), 258 to 278 (MAYP…SICL), 286 to 306 (LIAY…MIQT), 310 to 330 (FAGA…LFCL), 351 to 371 (VMLP…LALP), 394 to 414 (ILLT…MFLM), and 440 to 460 (LHLI…GWTF).

It belongs to the complex I subunit 4 family.

It localises to the mitochondrion membrane. The catalysed reaction is a ubiquinone + NADH + 5 H(+)(in) = a ubiquinol + NAD(+) + 4 H(+)(out). Core subunit of the mitochondrial membrane respiratory chain NADH dehydrogenase (Complex I) that is believed to belong to the minimal assembly required for catalysis. Complex I functions in the transfer of electrons from NADH to the respiratory chain. The immediate electron acceptor for the enzyme is believed to be ubiquinone. The chain is NADH-ubiquinone oxidoreductase chain 4 (MT-ND4) from Squalus acanthias (Spiny dogfish).